The chain runs to 860 residues: Leucine--tRNA ligase (860 aa).

A 'HIGH' region motif is present at residues 42-52; that stretch reads PYPSGRLHMGH. The 'KMSKS' region signature appears at 619 to 623; the sequence is KMSKS. ATP is bound at residue K622.

The protein belongs to the class-I aminoacyl-tRNA synthetase family.

The protein localises to the cytoplasm. The enzyme catalyses tRNA(Leu) + L-leucine + ATP = L-leucyl-tRNA(Leu) + AMP + diphosphate. This Escherichia coli O7:K1 (strain IAI39 / ExPEC) protein is Leucine--tRNA ligase.